The primary structure comprises 140 residues: Nucleoside diphosphate kinase (140 aa).

Lys11, Phe59, Arg87, Thr93, Arg104, and Asn114 together coordinate ATP. The active-site Pros-phosphohistidine intermediate is the His117.

Belongs to the NDK family. Homotetramer. It depends on Mg(2+) as a cofactor.

Its subcellular location is the cytoplasm. The catalysed reaction is a 2'-deoxyribonucleoside 5'-diphosphate + ATP = a 2'-deoxyribonucleoside 5'-triphosphate + ADP. It catalyses the reaction a ribonucleoside 5'-diphosphate + ATP = a ribonucleoside 5'-triphosphate + ADP. Its function is as follows. Major role in the synthesis of nucleoside triphosphates other than ATP. The ATP gamma phosphate is transferred to the NDP beta phosphate via a ping-pong mechanism, using a phosphorylated active-site intermediate. The protein is Nucleoside diphosphate kinase of Maricaulis maris (strain MCS10) (Caulobacter maris).